The following is a 443-amino-acid chain: uncharacterized protein (443 aa).

This is an uncharacterized protein from Mycoplasma genitalium (strain ATCC 33530 / DSM 19775 / NCTC 10195 / G37) (Mycoplasmoides genitalium).